Reading from the N-terminus, the 156-residue chain is Small ribosomal subunit protein uS7 (156 aa).

It belongs to the universal ribosomal protein uS7 family. As to quaternary structure, part of the 30S ribosomal subunit. Contacts proteins S9 and S11.

Its function is as follows. One of the primary rRNA binding proteins, it binds directly to 16S rRNA where it nucleates assembly of the head domain of the 30S subunit. Is located at the subunit interface close to the decoding center, probably blocks exit of the E-site tRNA. This is Small ribosomal subunit protein uS7 from Bartonella tribocorum (strain CIP 105476 / IBS 506).